Reading from the N-terminus, the 318-residue chain is DNA-directed RNA polymerase subunit alpha (318 aa).

Residues 1–227 (MTQFEIECLD…NLFSPLKTID (227 aa)) form an alpha N-terminal domain (alpha-NTD) region. The interval 241–318 (HINQILIEEL…KEKTTKIYNK (78 aa)) is alpha C-terminal domain (alpha-CTD).

It belongs to the RNA polymerase alpha chain family. In terms of assembly, in plastids the minimal PEP RNA polymerase catalytic core is composed of four subunits: alpha, beta, beta', and beta''. When a (nuclear-encoded) sigma factor is associated with the core the holoenzyme is formed, which can initiate transcription.

It localises to the plastid. Its subcellular location is the chloroplast. The catalysed reaction is RNA(n) + a ribonucleoside 5'-triphosphate = RNA(n+1) + diphosphate. In terms of biological role, DNA-dependent RNA polymerase catalyzes the transcription of DNA into RNA using the four ribonucleoside triphosphates as substrates. The polypeptide is DNA-directed RNA polymerase subunit alpha (Guillardia theta (Cryptophyte)).